A 544-amino-acid polypeptide reads, in one-letter code: Peptide chain release factor 3 (544 aa).

Residues 17–286 (EKRRNFAIIS…SFLDYGLAPR (270 aa)) form the tr-type G domain. GTP contacts are provided by residues 26-33 (SHPDAGKT), 94-98 (DTPGH), and 148-151 (NKMD).

Belongs to the TRAFAC class translation factor GTPase superfamily. Classic translation factor GTPase family. PrfC subfamily.

Its subcellular location is the cytoplasm. Functionally, increases the formation of ribosomal termination complexes and stimulates activities of RF-1 and RF-2. It binds guanine nucleotides and has strong preference for UGA stop codons. It may interact directly with the ribosome. The stimulation of RF-1 and RF-2 is significantly reduced by GTP and GDP, but not by GMP. This chain is Peptide chain release factor 3, found in Microcystis aeruginosa (strain NIES-843 / IAM M-2473).